The following is a 435-amino-acid chain: Enolase (435 aa).

The substrate site is built by histidine 155 and glutamate 164. The active-site Proton donor is glutamate 205. Residues aspartate 243, glutamate 292, and aspartate 319 each coordinate Mg(2+). Substrate is bound by residues glutamate 292, aspartate 319, lysine 344, 371–374, and lysine 395; that span reads SHRS. The active-site Proton acceptor is the lysine 344.

This sequence belongs to the enolase family. As to quaternary structure, homooctamer. Mg(2+) serves as cofactor.

Its subcellular location is the cytoplasm. It localises to the secreted. It is found in the cell surface. It catalyses the reaction (2R)-2-phosphoglycerate = phosphoenolpyruvate + H2O. It participates in carbohydrate degradation; glycolysis; pyruvate from D-glyceraldehyde 3-phosphate: step 4/5. Functionally, catalyzes the reversible conversion of 2-phosphoglycerate (2-PG) into phosphoenolpyruvate (PEP). It is essential for the degradation of carbohydrates via glycolysis. In terms of biological role, 'Moonlights' as a plasminogen receptor and plasmin activator. Binds host (human) plasminogen in vitro; enhances the activity of host tissue-specific plasminogen activator (tPA). This Streptococcus pyogenes serotype M1 protein is Enolase.